Reading from the N-terminus, the 376-residue chain is MDKHQKFDQSLFQRVDINVLKRSDQLIGKPTTNFVEIMKRLFQNKWAILFFLLIVLIILLAIIVPLASPYSAVTPVSNNALAQNLPPRYLWNGAGDIQVEKITARSIAEVAQSSGVLVGKLPEASSNPLATNVKYNIAPYQLAELKNYYPLLGTNGLGVDIWTLLWASMAKSLWIAIVVALVSMVFGTIYGAIAGSFVGRAADNIMSRIIEIIDLVPSILWIIVLGATFRFGGVKQFDDSVVIFTLIFVFWTWPAATTRIYILKNKDTEYIQAARTLGAKQIRIIFVHMLPVVTGRLAVVFVSLIPAVIGYEASLVFLGLKPATEVGLGALLNQVTSSGNIALITSSIVSFAILTVSTRVFANALNDAIDPRVIRR.

The next 7 membrane-spanning stretches (helical) occupy residues 46-66 (WAIL…IVPL), 149-169 (YPLL…WASM), 173-193 (LWIA…YGAI), 209-229 (IIEI…GATF), 242-262 (VIFT…RIYI), 297-317 (LAVV…SLVF), and 341-361 (IALI…TRVF). An ABC transmembrane type-1 domain is found at 169-362 (MAKSLWIAIV…ILTVSTRVFA (194 aa)).

It belongs to the binding-protein-dependent transport system permease family. OppBC subfamily. As to quaternary structure, the complex is composed of two ATP-binding proteins (OppD and OppF), two transmembrane proteins (OppB and OppC) and a solute-binding protein (OppA).

The protein localises to the cell membrane. Its function is as follows. Part of the ABC transporter complex OppABCDF involved in the uptake of oligopeptides. Probably responsible for the translocation of the substrate across the membrane. This is Oligopeptide transport system permease protein OppC (oppC) from Mycoplasma pneumoniae (strain ATCC 29342 / M129 / Subtype 1) (Mycoplasmoides pneumoniae).